Reading from the N-terminus, the 635-residue chain is 1-deoxy-D-xylulose-5-phosphate synthase (635 aa).

Thiamine diphosphate-binding positions include His79 and 120-122 (GHS). Asp151 lines the Mg(2+) pocket. Thiamine diphosphate is bound by residues 152–153 (GA), Asn182, Tyr291, and Glu372. A Mg(2+)-binding site is contributed by Asn182.

It belongs to the transketolase family. DXPS subfamily. In terms of assembly, homodimer. Mg(2+) serves as cofactor. Thiamine diphosphate is required as a cofactor.

It catalyses the reaction D-glyceraldehyde 3-phosphate + pyruvate + H(+) = 1-deoxy-D-xylulose 5-phosphate + CO2. It participates in metabolic intermediate biosynthesis; 1-deoxy-D-xylulose 5-phosphate biosynthesis; 1-deoxy-D-xylulose 5-phosphate from D-glyceraldehyde 3-phosphate and pyruvate: step 1/1. Catalyzes the acyloin condensation reaction between C atoms 2 and 3 of pyruvate and glyceraldehyde 3-phosphate to yield 1-deoxy-D-xylulose-5-phosphate (DXP). The protein is 1-deoxy-D-xylulose-5-phosphate synthase of Xylella fastidiosa (strain M23).